The sequence spans 499 residues: Glycerol kinase (499 aa).

Residue threonine 13 coordinates ADP. ATP contacts are provided by threonine 13, threonine 14, and serine 15. Position 13 (threonine 13) interacts with sn-glycerol 3-phosphate. An ADP-binding site is contributed by arginine 17. 4 residues coordinate sn-glycerol 3-phosphate: arginine 83, glutamate 84, tyrosine 135, and aspartate 245. The glycerol site is built by arginine 83, glutamate 84, tyrosine 135, aspartate 245, and glutamine 246. ADP contacts are provided by threonine 267 and glycine 310. Residues threonine 267, glycine 310, glutamine 314, and glycine 411 each contribute to the ATP site. ADP-binding residues include glycine 411 and asparagine 415.

The protein belongs to the FGGY kinase family. As to quaternary structure, homotetramer and homodimer (in equilibrium).

It catalyses the reaction glycerol + ATP = sn-glycerol 3-phosphate + ADP + H(+). It participates in polyol metabolism; glycerol degradation via glycerol kinase pathway; sn-glycerol 3-phosphate from glycerol: step 1/1. Its activity is regulated as follows. Activated by phosphorylation and inhibited by fructose 1,6-bisphosphate (FBP). Key enzyme in the regulation of glycerol uptake and metabolism. Catalyzes the phosphorylation of glycerol to yield sn-glycerol 3-phosphate. The sequence is that of Glycerol kinase from Halothermothrix orenii (strain H 168 / OCM 544 / DSM 9562).